The chain runs to 146 residues: Peptidyl-lysine N-acetyltransferase YiaC (146 aa).

An N-acetyltransferase domain is found at 1–143 (MIREAQRSEL…PTWIMSWPVV (143 aa)).

It belongs to the acetyltransferase family.

The catalysed reaction is L-lysyl-[protein] + acetyl-CoA = N(6)-acetyl-L-lysyl-[protein] + CoA + H(+). N-epsilon-lysine acetyltransferase that catalyzes acetylation of a large number of proteins. Overexpression inhibits motility. The chain is Peptidyl-lysine N-acetyltransferase YiaC (yiaC) from Escherichia coli (strain K12).